A 195-amino-acid chain; its full sequence is Probable GTP-binding protein EngB (195 aa).

Positions 22–195 (GLPEIALAGR…WNAILAKINK (174 aa)) constitute an EngB-type G domain. GTP contacts are provided by residues 30-37 (GRSNVGKS), 57-61 (GKTQT), 75-78 (DVPG), 142-145 (TKAD), and 174-176 (FSS). Residues Ser-37 and Thr-59 each contribute to the Mg(2+) site.

It belongs to the TRAFAC class TrmE-Era-EngA-EngB-Septin-like GTPase superfamily. EngB GTPase family. Requires Mg(2+) as cofactor.

In terms of biological role, necessary for normal cell division and for the maintenance of normal septation. The protein is Probable GTP-binding protein EngB of Bacillus pumilus (strain SAFR-032).